The sequence spans 170 residues: Fimbrial protein (170 aa).

A propeptide spanning residues M1–G7 is cleaved from the precursor. F8 is modified (N-methylphenylalanine). A helical transmembrane segment spans residues F8–L28. O-linked (Gal...) serine glycosylation is present at S70. Position 100 is an O-(sn-1-glycerophosphoryl)serine (S100). An intrachain disulfide couples C127 to C163.

Belongs to the N-Me-Phe pilin family. As to quaternary structure, the pili are polar flexible filaments of about 5.4 nanometers diameter and 2.5 micrometers average length; they consist of only a single polypeptide chain arranged in a helical configuration of five subunits per turn in the assembled pilus. O-linked glycan consists of GlcNAc-Gal disaccharide.

It is found in the fimbrium. The protein localises to the membrane. In terms of biological role, major component of the type IV pilus (T4P) that plays a role in cellular adherence, microcolony formation as well as twitching motility. The polypeptide is Fimbrial protein (pilE) (Neisseria meningitidis serogroup A / serotype 4A (strain DSM 15465 / Z2491)).